Reading from the N-terminus, the 291-residue chain is Elongation factor Ts (291 aa).

The segment at 81 to 84 is involved in Mg(2+) ion dislocation from EF-Tu; that stretch reads TDFV. The interval 271-291 is disordered; that stretch reads EGKEKKDESFADEVMAQVRDS.

This sequence belongs to the EF-Ts family.

The protein resides in the cytoplasm. Its function is as follows. Associates with the EF-Tu.GDP complex and induces the exchange of GDP to GTP. It remains bound to the aminoacyl-tRNA.EF-Tu.GTP complex up to the GTP hydrolysis stage on the ribosome. This is Elongation factor Ts from Halorhodospira halophila (strain DSM 244 / SL1) (Ectothiorhodospira halophila (strain DSM 244 / SL1)).